The following is a 695-amino-acid chain: ATP-dependent DNA helicase II subunit 2 (695 aa).

The region spanning 229–461 is the Ku domain; it reads FSIGNRDSKD…IDFAVSNYID (233 aa).

This sequence belongs to the ku80 family. Heterodimer of pku70 and pku80.

Its subcellular location is the nucleus. The protein localises to the chromosome. It is found in the telomere. The enzyme catalyses ATP + H2O = ADP + phosphate + H(+). Its function is as follows. Single-stranded DNA-dependent ATP-dependent helicase. Involved in non-homologous end joining (NHEJ) DNA double strand break repair. DNA-binding is sequence-independent but has a high affinity to nicks in double-stranded DNA and to the ends of duplex DNA. Binds to naturally occurring chromosomal ends, and therefore provides chromosomal end protection. Required also for telomere recombination to repair telomeric ends in the absence of telomerase. ku70, of the ku70/ku80 heterodimer, binds to the stem loop of tlc1, the RNA component of telomerase. Involved in telomere maintenance. Interacts with telomeric repeats and subtelomeric sequences thereby controlling telomere length and protecting against subtelomeric rearrangement. Required for mating-type switching. The sequence is that of ATP-dependent DNA helicase II subunit 2 (pku80) from Schizosaccharomyces pombe (strain 972 / ATCC 24843) (Fission yeast).